Here is a 1587-residue protein sequence, read N- to C-terminus: Mediator of RNA polymerase II transcription subunit 23 (1587 aa).

Disordered stretches follow at residues 1374-1484 (SQSE…QLQH) and 1567-1587 (QHQQYMQQQQQHHHQHQQQPH). A compositionally biased stretch (basic and acidic residues) spans 1385-1404 (PPEKEKSPEKEKEQEQEQHV). An acidic region spans residues 1387–1404 (EKEKSPEKEKEQEQEQHV). The span at 1410 to 1426 (LESTPSVSSLPQMQHHL) shows a compositional bias: polar residues. Residues 1430–1450 (PLLPSHQMMPPPQQHSSSLQH) show a composition bias toward low complexity. The segment covering 1463–1484 (DTSQHQTIQQQSNHPTQQQLQH) has biased composition (polar residues). Low complexity predominate over residues 1567-1576 (QHQQYMQQQQ). Residues 1577–1587 (QHHHQHQQQPH) show a composition bias toward basic residues.

The protein belongs to the Mediator complex subunit 23 family. As to quaternary structure, component of the Mediator complex. Interacts with let-19/mdt-13.

The protein resides in the nucleus. Functionally, component of the Mediator complex, a coactivator involved in regulated gene transcription of nearly all RNA polymerase II-dependent genes. Mediator functions as a bridge to convey information from gene-specific regulatory proteins to the basal RNA polymerase II transcription machinery. Mediator is recruited to promoters by direct interactions with regulatory proteins and serves as a scaffold for the assembly of a functional pre-initiation complex with RNA polymerase II and the general transcription factors. Functions downstream of receptor let-23 and let-60/Ras during vulval induction likely by down-regulating the expression of phosphatase dep-1 and lin-12/Notch in vulva precursor cell descendants with a primary cell fate. Acts to repress beta-catenin target genes. Required for asymmetric division of T-cells. Plays a role in responses to M.nematophilum-mediated bacterial infection by promoting tail swelling and preventing constipation. The protein is Mediator of RNA polymerase II transcription subunit 23 (sur-2) of Caenorhabditis elegans.